The primary structure comprises 403 residues: Ribose-phosphate pyrophosphokinase 1, chloroplastic (403 aa).

A chloroplast-targeting transit peptide spans 1-49 (MASLGLSFPPAAKTPTYLASSSSTFFSNSSLSVRTSQFRSRNSVFACVK). Mg(2+)-binding residues include D217, H219, D228, and D232. The tract at residues 303–318 (GKVAIMVDDMIDTAGT) is binding of phosphoribosylpyrophosphate.

It belongs to the ribose-phosphate pyrophosphokinase family. It depends on Mg(2+) as a cofactor.

It localises to the plastid. It is found in the chloroplast. The catalysed reaction is D-ribose 5-phosphate + ATP = 5-phospho-alpha-D-ribose 1-diphosphate + AMP + H(+). This is Ribose-phosphate pyrophosphokinase 1, chloroplastic (PRS1) from Arabidopsis thaliana (Mouse-ear cress).